We begin with the raw amino-acid sequence, 93 residues long: MSRSIKKGPFVHAGLLKKIEEMNQNGDKKVIKTWSRSSTIFPQMIGHTIAVHDGRKHIPVYVTEDMVGHKLGEFVLTRTFKGHIKNEKTSKRK.

Belongs to the universal ribosomal protein uS19 family.

Functionally, protein S19 forms a complex with S13 that binds strongly to the 16S ribosomal RNA. In Clostridium perfringens (strain ATCC 13124 / DSM 756 / JCM 1290 / NCIMB 6125 / NCTC 8237 / Type A), this protein is Small ribosomal subunit protein uS19.